The following is a 397-amino-acid chain: LIM/homeobox protein Lhx9 (397 aa).

LIM zinc-binding domains follow at residues 69 to 130 and 131 to 193; these read ALCA…RFSV and QRCA…LLQG. Disordered stretches follow at residues 248–272, 330–364, and 378–397; these read ENEA…RMRT, ENGG…TLTD, and SNMD…TNLF. Positions 267-326 form a DNA-binding region, homeobox; sequence TKRMRTSFKHHQLRTMKSYFAINHNPDAKDLKQLAQKTGLTKRVLQVWFQNARAKFRRNL. Positions 353–364 are enriched in low complexity; it reads LTPPGTATTLTD.

Interacts with LDB1 and LDB2.

Its subcellular location is the nucleus. In terms of biological role, involved in gonadal development. This Homo sapiens (Human) protein is LIM/homeobox protein Lhx9 (LHX9).